Here is a 458-residue protein sequence, read N- to C-terminus: MVTLSDRFVGSDLKTSGYPWWAGNARLINLSGKLLGAHVAHAGLIVFWAGAMTLFEVAHFTPEKPLYEQGDILLPHLASLGWGVGPGGEITDITPYFIVGVLHLISSAVLGLGGVYHTLRGPETLEQYSDFFSQDWKDKNQMTNILGFHLIVLGIGASLFVFKAMFFGGLYDPWVPGGGGVRVITNPTLSPSVLFGYLFRSPFGGEGWLIGVNNMEDVVGGHIWVALHCFIGGAWHLITRPFNWARRSLVWSGEAYLSYSLGALSLMGFIASMFVWFNNTVYPSEFYGPTGSEASQAQSFTFLIRDQRLGANIASAQGPTGLGKYLMRSPTGEVIFGGETMRFWDFRGPWLEPLRGPNGLDLDKLNNDVQPWQIRRAAEYMTHAPLASINSVGGVITEPNSVNYVNLRQWLAGSHFILGFFFLIGHLWHAGRARAAAAGFEKGIDRKTEPVLSMSDLD.

5 helical membrane passes run leucine 54–alanine 78, leucine 119–asparagine 140, lysine 163–threonine 185, arginine 240–serine 260, and tryptophan 276–alanine 297. Residue glutamate 352 participates in [CaMn4O5] cluster binding. The chain crosses the membrane as a helical span at residues arginine 432–aspartate 456.

Belongs to the PsbB/PsbC family. PsbC subfamily. In terms of assembly, PSII is composed of 1 copy each of membrane proteins PsbA, PsbB, PsbC, PsbD, PsbE, PsbF, PsbH, PsbI, PsbJ, PsbK, PsbL, PsbM, PsbT, PsbX, PsbY, PsbZ, Psb30/Ycf12, peripheral proteins PsbO, CyanoQ (PsbQ), PsbU, PsbV and a large number of cofactors. It forms dimeric complexes. The cofactor is Binds multiple chlorophylls and provides some of the ligands for the Ca-4Mn-5O cluster of the oxygen-evolving complex. It may also provide a ligand for a Cl- that is required for oxygen evolution. PSII binds additional chlorophylls, carotenoids and specific lipids..

The protein localises to the cellular thylakoid membrane. Its function is as follows. One of the components of the core complex of photosystem II (PSII). It binds chlorophyll and helps catalyze the primary light-induced photochemical processes of PSII. PSII is a light-driven water:plastoquinone oxidoreductase, using light energy to abstract electrons from H(2)O, generating O(2) and a proton gradient subsequently used for ATP formation. This Prochlorothrix hollandica protein is Photosystem II CP43 reaction center protein.